Here is a 27-residue protein sequence, read N- to C-terminus: Cupiennin-4a (27 aa).

Glutamate 27 is subject to Glutamic acid 1-amide.

Expressed by the venom gland.

The protein localises to the secreted. The polypeptide is Cupiennin-4a (Cupiennius salei (American wandering spider)).